Here is a 361-residue protein sequence, read N- to C-terminus: S-adenosylmethionine:tRNA ribosyltransferase-isomerase (361 aa).

It belongs to the QueA family. As to quaternary structure, monomer.

The protein resides in the cytoplasm. The enzyme catalyses 7-aminomethyl-7-carbaguanosine(34) in tRNA + S-adenosyl-L-methionine = epoxyqueuosine(34) in tRNA + adenine + L-methionine + 2 H(+). It participates in tRNA modification; tRNA-queuosine biosynthesis. Its function is as follows. Transfers and isomerizes the ribose moiety from AdoMet to the 7-aminomethyl group of 7-deazaguanine (preQ1-tRNA) to give epoxyqueuosine (oQ-tRNA). The protein is S-adenosylmethionine:tRNA ribosyltransferase-isomerase of Afipia carboxidovorans (strain ATCC 49405 / DSM 1227 / KCTC 32145 / OM5) (Oligotropha carboxidovorans).